We begin with the raw amino-acid sequence, 643 residues long: MGESARGGGSAETTGGLAAAVKTYLEYTPTGESIPAAAWRRRHRNVRVFVLAHIPLLLALGLYEGTESAVTGATIPPTPGILIAAELGIVGALVGLASIPSVSRRGRTALASTAVLASSVVLVQFSGGFIEAHFHFFVGMAVIAVYEDWLPFALGLVYVVFTHGVFGMINAERVYNHTAAINNPWVWGGIHGAFVLLLAGALMANWYSTERSREASQKRLEEARQKAQQVEDLEARQAEIEAEKAEAKRLKADAEEAREAAEAQQREVAALNERLEATANTYGAAMARAADGDLSVRLDPDVENDAMAAIAASFNEMLDETETTIREIQAVASDVAAASEDADAGVVEIEDASGQVSETVQEIAAGADEQREKLETVSGEMTDLSAAIEEVAASADSVAERSHETAAVAGDGEQTAEQAIADSRTVQSAVESTVQNVEALDDQLAEISEIVDLISDVAEQTNMLALNANIEAARADKSGDGFAVVADEVKDLAEETRASAGDIEALVADIDAQMQATVTEARTADESVQDAISAVDAVVDAFGTVAENAEETDTGVQEISTTTDDQAASTEEAVSMIAEVSDISTATAADAQQASTAAEQQTTAAATISENTAALREQADRLQGLVSTFDVHDESASTAARSE.

5 helical membrane passes run 48–68, 79–99, 115–134, 149–169, and 184–204; these read VFVL…GTES, PGIL…LASI, VLAS…EAHF, WLPF…FGMI, and PWVW…ALMA. The HAMP domain occupies 273-326; that stretch reads ERLEATANTYGAAMARAADGDLSVRLDPDVENDAMAAIAASFNEMLDETETTIR. A Methyl-accepting transducer domain is found at 345–581; sequence GVVEIEDASG…EAVSMIAEVS (237 aa).

This sequence belongs to the methyl-accepting chemotaxis (MCP) protein family. Post-translationally, methylated by CheR.

It localises to the cell membrane. In terms of biological role, potentially involved in chemo- or phototactic signal transduction. The polypeptide is Transducer protein Htr8 (htr8) (Halobacterium salinarum (strain ATCC 29341 / DSM 671 / R1)).